The chain runs to 182 residues: Methyl-coenzyme M reductase operon protein C (182 aa).

As to quaternary structure, MCR is composed of three subunits: alpha, beta, and gamma. The function of proteins C and D is not known.

The chain is Methyl-coenzyme M reductase operon protein C (mcrC) from Methanococcus voltae.